We begin with the raw amino-acid sequence, 179 residues long: Peptidyl-tRNA hydrolase 2, mitochondrial (179 aa).

A helical transmembrane segment spans residues 15–37; it reads STLGLAVGVACGMCLGWSLRVCF. Glycyl lysine isopeptide (Lys-Gly) (interchain with G-Cter in ubiquitin) cross-links involve residues Lys47, Lys76, Lys81, Lys95, Lys106, Lys115, Lys171, and Lys177.

Belongs to the PTH2 family. In terms of assembly, monomer. Ubiquitinated by PRKN during mitophagy, leading to its degradation and enhancement of mitophagy. Deubiquitinated by USP30.

It localises to the mitochondrion outer membrane. The enzyme catalyses an N-acyl-L-alpha-aminoacyl-tRNA + H2O = an N-acyl-L-amino acid + a tRNA + H(+). Peptidyl-tRNA hydrolase which releases tRNAs from the ribosome during protein synthesis. Promotes caspase-independent apoptosis by regulating the function of two transcriptional regulators, AES and TLE1. The polypeptide is Peptidyl-tRNA hydrolase 2, mitochondrial (PTRH2) (Homo sapiens (Human)).